Reading from the N-terminus, the 295-residue chain is Aspartate carbamoyltransferase catalytic subunit (295 aa).

The carbamoyl phosphate site is built by arginine 49 and threonine 50. Residue lysine 77 coordinates L-aspartate. Residues arginine 99, histidine 127, and glutamine 130 each contribute to the carbamoyl phosphate site. L-aspartate contacts are provided by arginine 161 and arginine 212. Glycine 251 and proline 252 together coordinate carbamoyl phosphate.

It belongs to the aspartate/ornithine carbamoyltransferase superfamily. ATCase family. In terms of assembly, heterododecamer (2C3:3R2) of six catalytic PyrB chains organized as two trimers (C3), and six regulatory PyrI chains organized as three dimers (R2).

The enzyme catalyses carbamoyl phosphate + L-aspartate = N-carbamoyl-L-aspartate + phosphate + H(+). The protein operates within pyrimidine metabolism; UMP biosynthesis via de novo pathway; (S)-dihydroorotate from bicarbonate: step 2/3. Catalyzes the condensation of carbamoyl phosphate and aspartate to form carbamoyl aspartate and inorganic phosphate, the committed step in the de novo pyrimidine nucleotide biosynthesis pathway. This Campylobacter jejuni subsp. jejuni serotype O:6 (strain 81116 / NCTC 11828) protein is Aspartate carbamoyltransferase catalytic subunit.